The following is a 244-amino-acid chain: MKIDLNADLGEGCASDAELLTLVSSANIACGFHAGDAQTMQACVREAIKNGVAIGAHPSFPDRENFGRSAMQLPPETVYAQTLYQIGALATIARAQGGVMRHVKPHGMLYNQAAKEAQLADAIARAVYACDPALVLVGLAGSELIRAGKQYGLTTREEVFADRGYQADGSLVPRSQPGALIENEEQALAQTLEMVQHGRVKSITGEWATVTAQTVCLHGDGEHALAFARRLRSTFAEKEIVVAA.

This sequence belongs to the LamB/PxpA family. As to quaternary structure, forms a complex composed of PxpA, PxpB and PxpC.

It carries out the reaction 5-oxo-L-proline + ATP + 2 H2O = L-glutamate + ADP + phosphate + H(+). In terms of biological role, catalyzes the cleavage of 5-oxoproline to form L-glutamate coupled to the hydrolysis of ATP to ADP and inorganic phosphate. This chain is 5-oxoprolinase subunit A, found in Escherichia coli O139:H28 (strain E24377A / ETEC).